Consider the following 378-residue polypeptide: Lipoyl synthase, mitochondrial (378 aa).

Cys109, Cys114, Cys120, Cys140, Cys144, Cys147, and Ser356 together coordinate [4Fe-4S] cluster. The 221-residue stretch at 125–345 folds into the Radical SAM core domain; the sequence is ETGTATATIM…QTLGMEMGFR (221 aa).

Belongs to the radical SAM superfamily. Lipoyl synthase family. The cofactor is [4Fe-4S] cluster.

The protein localises to the mitochondrion. The catalysed reaction is [[Fe-S] cluster scaffold protein carrying a second [4Fe-4S](2+) cluster] + N(6)-octanoyl-L-lysyl-[protein] + 2 oxidized [2Fe-2S]-[ferredoxin] + 2 S-adenosyl-L-methionine + 4 H(+) = [[Fe-S] cluster scaffold protein] + N(6)-[(R)-dihydrolipoyl]-L-lysyl-[protein] + 4 Fe(3+) + 2 hydrogen sulfide + 2 5'-deoxyadenosine + 2 L-methionine + 2 reduced [2Fe-2S]-[ferredoxin]. The protein operates within protein modification; protein lipoylation via endogenous pathway; protein N(6)-(lipoyl)lysine from octanoyl-[acyl-carrier-protein]: step 2/2. Its function is as follows. Catalyzes the radical-mediated insertion of two sulfur atoms into the C-6 and C-8 positions of the octanoyl moiety bound to the lipoyl domains of lipoate-dependent enzymes, thereby converting the octanoylated domains into lipoylated derivatives. The chain is Lipoyl synthase, mitochondrial from Medicago truncatula (Barrel medic).